The sequence spans 261 residues: 5'-nucleotidase SurE (261 aa).

Residues D8, D9, S43, and N96 each contribute to the a divalent metal cation site.

The protein belongs to the SurE nucleotidase family. The cofactor is a divalent metal cation.

The protein resides in the cytoplasm. The enzyme catalyses a ribonucleoside 5'-phosphate + H2O = a ribonucleoside + phosphate. In terms of biological role, nucleotidase that shows phosphatase activity on nucleoside 5'-monophosphates. In Dinoroseobacter shibae (strain DSM 16493 / NCIMB 14021 / DFL 12), this protein is 5'-nucleotidase SurE.